A 1275-amino-acid polypeptide reads, in one-letter code: Rho1 guanine nucleotide exchange factor 3 (1275 aa).

Disordered stretches follow at residues 1–42, 56–113, 131–188, and 214–248; these read MKLS…SFQK, SPPF…NSAA, NNPL…SPYS, and LSPTRSPARTPSPIRLYSSDALRPQSPLSPSVEYL. Basic and acidic residues predominate over residues 7-17; the sequence is LFHRSSKDHGG. Composition is skewed to polar residues over residues 32–42, 80–113, and 142–151; these read PHSSSPPSFQK, ASINSRRVASYTVQSSPSRTTYRQLPNEPQNSAA, and SPGNKQNTVD. Low complexity-rich tracts occupy residues 178–188 and 214–228; these read SSVSSHSSPYS and LSPTRSPARTPSPIR. A Phosphoserine modification is found at Ser293. Positions 465 to 657 constitute a DH domain; that stretch reads ARQNNIHELI…RATCEECDAV (193 aa). Residues 692-855 enclose the PH domain; it reads EFFFEGIVQR…WVEKINVAKK (164 aa). The region spanning 930–1239 is the CNH domain; the sequence is YGDISCIAQF…KYYPSNSDWL (310 aa).

Its subcellular location is the cytoplasm. In terms of biological role, stimulates the exchange of Rho1 GDP-bound form into GTP-bound form. Regulates, via interaction and activation of Rho1, beta-1,3-glucan biosynthesis and cell wall integrity during septation. Involved in the regulation of contractile ring assembly. This Schizosaccharomyces pombe (strain 972 / ATCC 24843) (Fission yeast) protein is Rho1 guanine nucleotide exchange factor 3 (rgf3).